Reading from the N-terminus, the 137-residue chain is Large ribosomal subunit protein uL16c (137 aa).

Positions 1-21 (MLSPKRTKFRRHHRGRMKGKA) are disordered.

The protein belongs to the universal ribosomal protein uL16 family. As to quaternary structure, part of the 50S ribosomal subunit.

It is found in the plastid. The protein localises to the chloroplast. In Tupiella akineta (Green alga), this protein is Large ribosomal subunit protein uL16c.